The following is a 517-amino-acid chain: Ribose import ATP-binding protein RbsA 2 (517 aa).

ABC transporter domains lie at 11-251 (LEMR…VGRD) and 263-507 (YDPG…ALAT). 43 to 50 (GENGAGKS) contributes to the ATP binding site.

It belongs to the ABC transporter superfamily. Ribose importer (TC 3.A.1.2.1) family. In terms of assembly, the complex is composed of an ATP-binding protein (RbsA), two transmembrane proteins (RbsC) and a solute-binding protein (RbsB).

It localises to the cell inner membrane. It catalyses the reaction D-ribose(out) + ATP + H2O = D-ribose(in) + ADP + phosphate + H(+). Part of the ABC transporter complex RbsABC involved in ribose import. Responsible for energy coupling to the transport system. The chain is Ribose import ATP-binding protein RbsA 2 from Burkholderia pseudomallei (strain 1710b).